We begin with the raw amino-acid sequence, 309 residues long: General transcription factor IIH subunit 3 (309 aa).

The segment at 269 to 286 adopts a C4-type zinc-finger fold; that stretch reads CSVCLSIFCNFSPICTTC.

It belongs to the TFB4 family. Part of a TFIID-containing RNA polymerase II pre-initiation complex that is composed of TBP and at least GTF2A1, GTF2A2, GTF2E1, GTF2E2, GTF2F1, GTF2H2, GTF2H3, GTF2H4, GTF2H5, GTF2B, TCEA1, ERCC2, ERCC3, TAF1, TAF2, TAF3, TAF4, TAF5, TAF6, TAF7, TAF8, TAF9, TAF10, TAF11, TAF12 and TAF13. Component of the 7-subunit TFIIH core complex composed of XPB/ERCC3, XPD/ERCC2, GTF2H1, GTF2H2, GTF2H3, GTF2H4 and GTF2H5, which is active in NER. The core complex associates with the 3-subunit CDK-activating kinase (CAK) module composed of CCNH/cyclin H, CDK7 and MNAT1 to form the 10-subunit holoenzyme (holo-TFIIH) active in transcription. Interacts with RARA; the interaction requires prior phosphorylation of RARA on 'Ser-369' which then enhances interaction of RARA with CDK7.

Its subcellular location is the nucleus. Its function is as follows. Component of the general transcription and DNA repair factor IIH (TFIIH) core complex, which is involved in general and transcription-coupled nucleotide excision repair (NER) of damaged DNA and, when complexed to CAK, in RNA transcription by RNA polymerase II. In NER, TFIIH acts by opening DNA around the lesion to allow the excision of the damaged oligonucleotide and its replacement by a new DNA fragment. In transcription, TFIIH has an essential role in transcription initiation. When the pre-initiation complex (PIC) has been established, TFIIH is required for promoter opening and promoter escape. Phosphorylation of the C-terminal tail (CTD) of the largest subunit of RNA polymerase II by the kinase module CAK controls the initiation of transcription. This chain is General transcription factor IIH subunit 3 (Gtf2h3), found in Rattus norvegicus (Rat).